The chain runs to 609 residues: Phosphoenolpyruvate carboxykinase [GTP] (609 aa).

Residues Arg-81 and 220–222 (YGG) each bind substrate. 2 residues coordinate Mn(2+): Lys-229 and His-249. A substrate-binding site is contributed by Ser-271. Position 272-277 (272-277 (ACGKTN)) interacts with GTP. Cys-273 is an active-site residue. Residue Asp-296 coordinates Mn(2+). 387-389 (NSR) provides a ligand contact to substrate. GTP is bound by residues Arg-389, Arg-420, and 515–518 (FGEN).

This sequence belongs to the phosphoenolpyruvate carboxykinase [GTP] family. In terms of assembly, monomer. Mn(2+) serves as cofactor.

Its subcellular location is the cytoplasm. It catalyses the reaction oxaloacetate + GTP = phosphoenolpyruvate + GDP + CO2. It participates in carbohydrate biosynthesis; gluconeogenesis. Functionally, catalyzes the conversion of oxaloacetate (OAA) to phosphoenolpyruvate (PEP), the rate-limiting step in the metabolic pathway that produces glucose from lactate and other precursors derived from the citric acid cycle. This Mycobacterium ulcerans (strain Agy99) protein is Phosphoenolpyruvate carboxykinase [GTP].